Consider the following 360-residue polypeptide: Peptide chain release factor 1 (360 aa).

At Gln235 the chain carries N5-methylglutamine. The segment at 285 to 311 is disordered; the sequence is KRQQAQASERRNLLGSGDRSDRHRTYN. Positions 292-308 are enriched in basic and acidic residues; the sequence is SERRNLLGSGDRSDRHR.

It belongs to the prokaryotic/mitochondrial release factor family. In terms of processing, methylated by PrmC. Methylation increases the termination efficiency of RF1.

It is found in the cytoplasm. Peptide chain release factor 1 directs the termination of translation in response to the peptide chain termination codons UAG and UAA. The sequence is that of Peptide chain release factor 1 from Hamiltonella defensa subsp. Acyrthosiphon pisum (strain 5AT).